The chain runs to 158 residues: Small ribosomal subunit protein uS19 (158 aa).

The protein belongs to the universal ribosomal protein uS19 family.

Functionally, protein S19 forms a complex with S13 that binds strongly to the 16S ribosomal RNA. This Pyrobaculum neutrophilum (strain DSM 2338 / JCM 9278 / NBRC 100436 / V24Sta) (Thermoproteus neutrophilus) protein is Small ribosomal subunit protein uS19.